The primary structure comprises 152 residues: Large ribosomal subunit protein uL15 (152 aa).

The disordered stretch occupies residues 1–56; that stretch reads MTSTLNTLKSNLGSRKKKLRKGRGIAAGQGASCGFGMRGQKSRSGRPTRPGFEGGQ. Residues 14–23 are compositionally biased toward basic residues; sequence SRKKKLRKGR. Positions 25 to 37 are enriched in gly residues; that stretch reads IAAGQGASCGFGM.

This sequence belongs to the universal ribosomal protein uL15 family. In terms of assembly, part of the 50S ribosomal subunit.

In terms of biological role, binds to the 23S rRNA. The polypeptide is Large ribosomal subunit protein uL15 (Prochlorococcus marinus (strain MIT 9515)).